The sequence spans 515 residues: Maturase K (515 aa).

It belongs to the intron maturase 2 family. MatK subfamily.

The protein resides in the plastid. Its subcellular location is the chloroplast. Its function is as follows. Usually encoded in the trnK tRNA gene intron. Probably assists in splicing its own and other chloroplast group II introns. This chain is Maturase K, found in Pinus elliottii (Slash pine).